Reading from the N-terminus, the 621-residue chain is Glutathione-regulated potassium-efflux system protein KefC (621 aa).

12 helical membrane-spanning segments follow: residues 4-24, 26-46, 54-74, 90-110, 114-134, 149-169, 178-198, 218-238, 270-290, 294-314, 326-346, and 359-379; these read HTLI…PIAV, LGLG…PWGL, AILH…GLEL, GALQ…LLGL, VAEL…MQAM, FAVL…IPLL, LVAF…VVAL, VFSA…EEVG, GLLL…GTLV, LRIV…LWLI, RWFA…FGAA, and ALTL…VLLT. In terms of domain architecture, RCK N-terminal spans 399 to 518; the sequence is QPRVIVAGFG…AGVEAPERET (120 aa). The tract at residues 598-621 is disordered; the sequence is GWQGTEEGRHTGDIADEPENKPSA.

Belongs to the monovalent cation:proton antiporter 2 (CPA2) transporter (TC 2.A.37) family. KefC subfamily. Homodimer. Interacts with the regulatory subunit KefF.

The protein localises to the cell inner membrane. In terms of biological role, pore-forming subunit of a potassium efflux system that confers protection against electrophiles. Catalyzes K(+)/H(+) antiport. The protein is Glutathione-regulated potassium-efflux system protein KefC of Klebsiella pneumoniae (strain 342).